The sequence spans 343 residues: SET and MYND domain-containing protein DDB_G0292454 (343 aa).

The 231-residue stretch at 77–307 folds into the SET domain; the sequence is EPFISYPSII…PGDEITISYT (231 aa). The Zn(2+) site is built by Cys93, Cys96, Cys111, Cys114, Cys120, Cys124, His133, and Cys137. Residues 93–137 form an MYND-type zinc finger; the sequence is CNHCLKEIKKEEEEIKQECEECKVYKYCSIECKEKSSIEYHSVLC.

Belongs to the class V-like SAM-binding methyltransferase superfamily.

Its function is as follows. Probable methyltransferase. The sequence is that of SET and MYND domain-containing protein DDB_G0292454 from Dictyostelium discoideum (Social amoeba).